We begin with the raw amino-acid sequence, 881 residues long: DNA mismatch repair protein MutS (881 aa).

612-619 lines the ATP pocket; that stretch reads GPNMAGKS.

Belongs to the DNA mismatch repair MutS family.

In terms of biological role, this protein is involved in the repair of mismatches in DNA. It is possible that it carries out the mismatch recognition step. This protein has a weak ATPase activity. The polypeptide is DNA mismatch repair protein MutS (Clostridium tetani (strain Massachusetts / E88)).